A 131-amino-acid chain; its full sequence is CDGSH iron-sulfur domain-containing protein 2 homolog A (131 aa).

At 1-35 (MEFLSKIVRVHIPDYLNSVPVPDSFGGFLDLTAGQ) the chain is on the lumenal side. A helical membrane pass occupies residues 36–58 (WLHLFAFSGTVAAAVYMSVKPYL). The Cytoplasmic portion of the chain corresponds to 59–131 (DKKDQKDQLV…GPLVLKRKDV (73 aa)). Residues Cys-95, Cys-97, Cys-106, and His-110 each coordinate [2Fe-2S] cluster.

The protein belongs to the CISD protein family. CISD2 subfamily. [2Fe-2S] cluster serves as cofactor.

The protein localises to the endoplasmic reticulum membrane. The protein is CDGSH iron-sulfur domain-containing protein 2 homolog A of Branchiostoma floridae (Florida lancelet).